We begin with the raw amino-acid sequence, 599 residues long: Elongation factor 4 (599 aa).

The tr-type G domain maps to 5 to 187 (SHIRNFSIIA…ALVNGIPAPV (183 aa)). Residues 17–22 (DHGKST) and 134–137 (NKMD) each bind GTP.

It belongs to the TRAFAC class translation factor GTPase superfamily. Classic translation factor GTPase family. LepA subfamily.

The protein resides in the cell inner membrane. The enzyme catalyses GTP + H2O = GDP + phosphate + H(+). Required for accurate and efficient protein synthesis under certain stress conditions. May act as a fidelity factor of the translation reaction, by catalyzing a one-codon backward translocation of tRNAs on improperly translocated ribosomes. Back-translocation proceeds from a post-translocation (POST) complex to a pre-translocation (PRE) complex, thus giving elongation factor G a second chance to translocate the tRNAs correctly. Binds to ribosomes in a GTP-dependent manner. The chain is Elongation factor 4 from Teredinibacter turnerae (strain ATCC 39867 / T7901).